Consider the following 81-residue polypeptide: D-alanyl carrier protein (81 aa).

The region spanning 1–81 (MADEAIKNGV…KIIAKVEQAQ (81 aa)) is the Carrier domain. S39 is subject to O-(pantetheine 4'-phosphoryl)serine.

This sequence belongs to the DltC family. Post-translationally, 4'-phosphopantetheine is transferred from CoA to a specific serine of apo-DCP.

It is found in the cytoplasm. It participates in cell wall biogenesis; lipoteichoic acid biosynthesis. In terms of biological role, carrier protein involved in the D-alanylation of lipoteichoic acid (LTA). The loading of thioester-linked D-alanine onto DltC is catalyzed by D-alanine--D-alanyl carrier protein ligase DltA. The DltC-carried D-alanyl group is further transferred to cell membrane phosphatidylglycerol (PG) by forming an ester bond, probably catalyzed by DltD. D-alanylation of LTA plays an important role in modulating the properties of the cell wall in Gram-positive bacteria, influencing the net charge of the cell wall. This chain is D-alanyl carrier protein, found in Lacticaseibacillus rhamnosus (Lactobacillus rhamnosus).